The sequence spans 445 residues: Arginine/agmatine antiporter (445 aa).

The Cytoplasmic segment spans residues methionine 1–lysine 9. Residues valine 10–leucine 30 form a helical membrane-spanning segment. Isoleucine 23 contacts agmatine. The L-arginine site is built by isoleucine 23 and serine 26. Topologically, residues leucine 31–threonine 38 are periplasmic. Residues glycine 39–valine 59 traverse the membrane as a helical segment. Topologically, residues tyrosine 60–tryptophan 98 are cytoplasmic. Residues alanine 96, cysteine 97, and asparagine 101 each coordinate agmatine. Residue alanine 96 participates in L-arginine binding. The chain crosses the membrane as a helical span at residues isoleucine 99–leucine 119. Residues lysine 120–proline 122 are Periplasmic-facing. Residues leucine 123–glycine 143 form a helical membrane-spanning segment. Residues proline 144–alanine 152 lie on the Cytoplasmic side of the membrane. A helical membrane pass occupies residues valine 153–phenylalanine 173. Topologically, residues lysine 174–threonine 196 are periplasmic. A helical membrane pass occupies residues leucine 197–valine 217. L-arginine contacts are provided by tryptophan 202 and isoleucine 205. Position 205 (isoleucine 205) interacts with agmatine. At lysine 218–proline 225 the chain is on the cytoplasmic side. The chain crosses the membrane as a helical span at residues isoleucine 226–isoleucine 246. Over methionine 247–glycine 275 the chain is Periplasmic. A helical transmembrane segment spans residues alanine 276–leucine 296. Residue tryptophan 293 participates in agmatine binding. Topologically, residues alanine 297 to lysine 319 are cytoplasmic. The helical transmembrane segment at alanine 320–serine 340 threads the bilayer. The Periplasmic segment spans residues serine 341–serine 355. Residues valine 356–glycine 376 form a helical membrane-spanning segment. An L-arginine-binding site is contributed by serine 357. Topologically, residues histidine 377 to proline 385 are cytoplasmic. Residues leucine 386 to glycine 406 form a helical membrane-spanning segment. Topologically, residues alanine 407–lysine 408 are periplasmic. A helical transmembrane segment spans residues glutamate 409–asparagine 429. The Cytoplasmic segment spans residues arginine 430–aspartate 445.

The protein belongs to the amino acid-polyamine-organocation (APC) superfamily. Basic amino acid/polyamine antiporter (APA) (TC 2.A.3.2) family. As to quaternary structure, homodimer; each subunit has its own individual transport capacity.

Its subcellular location is the cell inner membrane. The enzyme catalyses agmatine(in) + L-arginine(out) = agmatine(out) + L-arginine(in). Major component of the acid-resistance (AR) system allowing enteric pathogens to survive the acidic environment in the stomach. Exchanges extracellular arginine for its intracellular decarboxylation product agmatine (Agm) thereby expelling intracellular protons. Probably undergoes several conformational states in order to translocate the substrate across the membrane; keeps the substrate accessible to only 1 side of the membrane at a time by opening and closing 3 membrane-internal gates. The sequence is that of Arginine/agmatine antiporter (adiC) from Salmonella typhi.